The primary structure comprises 361 residues: Putative agmatine deiminase (361 aa).

The active-site Amidino-cysteine intermediate is Cys-354.

The protein belongs to the agmatine deiminase family.

The enzyme catalyses agmatine + H2O = N-carbamoylputrescine + NH4(+). The protein is Putative agmatine deiminase of Streptococcus pneumoniae (strain Taiwan19F-14).